Here is a 374-residue protein sequence, read N- to C-terminus: Pectinesterase (374 aa).

The signal sequence occupies residues 1-31 (MVKLLNSTRELSINALSMLNSFGDMVAQATG). N-linked (GlcNAc...) asparagine glycans are attached at residues Asn-58 and Asn-124. The substrate site is built by Thr-133 and Gln-163. Residue Asp-186 is the Proton donor of the active site. Residues Cys-200 and Cys-220 are joined by a disulfide bond. Asp-207 functions as the Nucleophile in the catalytic mechanism. N-linked (GlcNAc...) asparagine glycosylation occurs at Asn-230. The substrate site is built by Arg-275 and Trp-277. N-linked (GlcNAc...) asparagine glycosylation occurs at Asn-303.

This sequence belongs to the pectinesterase family. In terms of tissue distribution, pollen, and at much lower levels in pistils and petals.

It localises to the secreted. Its subcellular location is the cell wall. It carries out the reaction [(1-&gt;4)-alpha-D-galacturonosyl methyl ester](n) + n H2O = [(1-&gt;4)-alpha-D-galacturonosyl](n) + n methanol + n H(+). It functions in the pathway glycan metabolism; pectin degradation; 2-dehydro-3-deoxy-D-gluconate from pectin: step 1/5. In terms of biological role, may play a role in pollen germination and/or tube growth. This is Pectinesterase (PPE1) from Petunia integrifolia (Violet-flowered petunia).